The primary structure comprises 148 residues: Leghemoglobin 29 (148 aa).

One can recognise a Globin domain in the interval 2–148 (EFTLRQEALV…LAVAIMKEMS (147 aa)). The residue at position 30 (tyrosine 30) is a Nitrated tyrosine. Serine 45 contacts heme b. Serine 45 carries the post-translational modification Phosphoserine. An O2-binding site is contributed by histidine 63. Heme b-binding residues include histidine 95 and lysine 98. Position 136 is a nitrated tyrosine (tyrosine 136).

It belongs to the plant globin family. As to quaternary structure, monomer. Nitrated in effective nodules and particularly in hypoxic conditions; this mechanism may play a protective role in the symbiosis by buffering toxic peroxynitrite NO(2)(-). Nitration level decrease during nodule senescence. In terms of processing, phosphorylation at Ser-45 disrupts the molecular environment of its porphyrin ring oxygen binding pocket, thus leading to a reduced oxygen consumption and to the delivery of oxygen O(2) to symbiosomes. Accumulates in root nodules after inoculation by bacteria of the genus Rhizobium. Expressed in mycorrhizal roots in the presence of the mycorrhizal fungus Glomus fasciculatum.

Its subcellular location is the cytoplasm. It is found in the cytosol. It localises to the nucleus. In terms of biological role, leghemoglobin that reversibly binds oxygen O(2) through a pentacoordinated heme iron. In root nodules, facilitates the diffusion of oxygen to the bacteroids while preventing the bacterial nitrogenase from being inactivated by buffering dioxygen, nitric oxide and carbon monoxide, and promoting the formation of reactive oxygen species (ROS, e.g. H(2)O(2)). This role is essential for symbiotic nitrogen fixation (SNF). This chain is Leghemoglobin 29, found in Vicia faba (Broad bean).